The following is a 182-amino-acid chain: UPF0301 protein NMB1336 (182 aa).

The protein belongs to the UPF0301 (AlgH) family.

The polypeptide is UPF0301 protein NMB1336 (Neisseria meningitidis serogroup B (strain ATCC BAA-335 / MC58)).